A 225-amino-acid chain; its full sequence is Agamous-like MADS-box protein MADS1 (225 aa).

Expressed in flowers and seeds.

It localises to the nucleus. Probable transcription factor involved in flower development. This is Agamous-like MADS-box protein MADS1 from Vitis vinifera (Grape).